The chain runs to 775 residues: ATP-dependent 6-phosphofructokinase 2 (775 aa).

Residues 1-390 (MTNTILDTYS…YHSAYRHLNT (390 aa)) are N-terminal catalytic PFK domain 1. Residues G25, 88–89 (RC), and 118–121 (GDGS) contribute to the ATP site. D119 contacts Mg(2+). Substrate is bound by residues 164–166 (SID), R201, 208–210 (MGR), E264, R292, and 298–301 (HIQR). Residue D166 is the Proton acceptor of the active site. The interval 391 to 404 (SDHPKMVLPEDKRM) is interdomain linker. The tract at residues 405–775 (RVAIIHVGAP…GRSSLYAIPN (371 aa)) is C-terminal regulatory PFK domain 2. Beta-D-fructose 2,6-bisphosphate is bound by residues 537-541 (SMSNN), 582-584 (QGA), D640, and 672-675 (HFQQ).

The protein belongs to the phosphofructokinase type A (PFKA) family. ATP-dependent PFK group I subfamily. Eukaryotic two domain clade 'E' sub-subfamily. As to quaternary structure, homotetramer. Mg(2+) serves as cofactor.

Its subcellular location is the cytoplasm. The catalysed reaction is beta-D-fructose 6-phosphate + ATP = beta-D-fructose 1,6-bisphosphate + ADP + H(+). It participates in carbohydrate degradation; glycolysis; D-glyceraldehyde 3-phosphate and glycerone phosphate from D-glucose: step 3/4. With respect to regulation, allosterically activated by ADP, AMP, or fructose 2,6-bisphosphate, and allosterically inhibited by ATP or citrate. Catalyzes the phosphorylation of D-fructose 6-phosphate to fructose 1,6-bisphosphate by ATP, the first committing step of glycolysis. In Aspergillus oryzae (strain ATCC 42149 / RIB 40) (Yellow koji mold), this protein is ATP-dependent 6-phosphofructokinase 2 (pfkB).